We begin with the raw amino-acid sequence, 87 residues long: MQRNFRKTFVGKVVSDKMDKTITVIVDIYKKDPLYGKRVKQSKKFHVHDENQEAKPGDLVNFMETRPLSKTKRFRLFKILSHAKSAK.

This sequence belongs to the universal ribosomal protein uS17 family. In terms of assembly, part of the 30S ribosomal subunit.

Its function is as follows. One of the primary rRNA binding proteins, it binds specifically to the 5'-end of 16S ribosomal RNA. This Onion yellows phytoplasma (strain OY-M) protein is Small ribosomal subunit protein uS17.